Reading from the N-terminus, the 82-residue chain is Beta-insect toxin AaBTxL1 (82 aa).

Residues 1–22 form the signal peptide; that stretch reads MMKLVLFSVIVILFSLIGSIHG. An LCN-type CS-alpha/beta domain is found at 25–82; that stretch reads VPGNYPLDRSGKKYPCTITWKKNPSCIQICKKHGVKYGYCFDFQCWCEIFGRLKTFKI. 3 cysteine pairs are disulfide-bonded: C40–C64, C50–C69, and C54–C71.

This sequence belongs to the long (3 C-C) scorpion toxin superfamily. Sodium channel inhibitor family. Beta subfamily. In terms of tissue distribution, expressed by the venom gland.

The protein resides in the secreted. In terms of biological role, shifts the voltage of activation of para/tipE voltage-dependent sodium channels (Nav) toward more negative potentials. This Androctonus australis (Sahara scorpion) protein is Beta-insect toxin AaBTxL1.